Here is a 495-residue protein sequence, read N- to C-terminus: N-succinylglutamate 5-semialdehyde dehydrogenase (495 aa).

NAD(+) is bound at residue 228 to 233 (GSYATG). Catalysis depends on residues glutamate 251 and cysteine 285.

This sequence belongs to the aldehyde dehydrogenase family. AstD subfamily.

The enzyme catalyses N-succinyl-L-glutamate 5-semialdehyde + NAD(+) + H2O = N-succinyl-L-glutamate + NADH + 2 H(+). The protein operates within amino-acid degradation; L-arginine degradation via AST pathway; L-glutamate and succinate from L-arginine: step 4/5. Catalyzes the NAD-dependent reduction of succinylglutamate semialdehyde into succinylglutamate. In Legionella pneumophila (strain Corby), this protein is N-succinylglutamate 5-semialdehyde dehydrogenase.